A 484-amino-acid chain; its full sequence is Protein nucleotidyltransferase YdiU (484 aa).

ATP is bound by residues Gly81, Gly83, Arg84, Lys103, Asp115, Gly116, Arg166, and Arg173. Catalysis depends on Asp244, which acts as the Proton acceptor. 2 residues coordinate Mg(2+): Asn245 and Asp254. Asp254 contacts ATP.

This sequence belongs to the SELO family. It depends on Mg(2+) as a cofactor. Mn(2+) is required as a cofactor.

It carries out the reaction L-seryl-[protein] + ATP = 3-O-(5'-adenylyl)-L-seryl-[protein] + diphosphate. It catalyses the reaction L-threonyl-[protein] + ATP = 3-O-(5'-adenylyl)-L-threonyl-[protein] + diphosphate. The enzyme catalyses L-tyrosyl-[protein] + ATP = O-(5'-adenylyl)-L-tyrosyl-[protein] + diphosphate. The catalysed reaction is L-histidyl-[protein] + UTP = N(tele)-(5'-uridylyl)-L-histidyl-[protein] + diphosphate. It carries out the reaction L-seryl-[protein] + UTP = O-(5'-uridylyl)-L-seryl-[protein] + diphosphate. It catalyses the reaction L-tyrosyl-[protein] + UTP = O-(5'-uridylyl)-L-tyrosyl-[protein] + diphosphate. Nucleotidyltransferase involved in the post-translational modification of proteins. It can catalyze the addition of adenosine monophosphate (AMP) or uridine monophosphate (UMP) to a protein, resulting in modifications known as AMPylation and UMPylation. The chain is Protein nucleotidyltransferase YdiU from Shewanella putrefaciens (strain CN-32 / ATCC BAA-453).